A 203-amino-acid polypeptide reads, in one-letter code: CASP-like protein 5A2 (203 aa).

Over 1–63 the chain is Cytoplasmic; sequence MRASRPVVHP…KDPPGAPGTP (63 aa). Residues 39–58 are disordered; sequence AAHGGENAQPRGVRMKDPPG. Residues 64–84 form a helical membrane-spanning segment; sequence GGLGLRLVQAFFAAAALAVMA. Topologically, residues 85–94 are extracellular; the sequence is STDDFPSVSA. Residues 95-115 traverse the membrane as a helical segment; that stretch reads FCYLVAAAILQCLWSLSLAVV. Residues 116 to 139 lie on the Cytoplasmic side of the membrane; it reads DIYALLVKRSLRNPQAVCIFTIGD. A helical transmembrane segment spans residues 140-160; it reads GITGTLTLGAACASAGITVLI. The Extracellular segment spans residues 161–177; it reads GNDLNICANNHCASFET. A helical membrane pass occupies residues 178–198; sequence ATAMAFISWFALAPSCVLNFW. At 199–203 the chain is on the cytoplasmic side; that stretch reads SMASR.

The protein belongs to the Casparian strip membrane proteins (CASP) family. Homodimer and heterodimers.

Its subcellular location is the cell membrane. This is CASP-like protein 5A2 from Oryza sativa subsp. indica (Rice).